The primary structure comprises 407 residues: Pleckstrin homology-like domain family A member 1 (407 aa).

Composition is skewed to basic and acidic residues over residues 1 to 11 and 54 to 63; these read MRRTPAAERLS and RSAEDGREQP. The interval 1 to 67 is disordered; sequence MRRTPAAERL…DGREQPAHGS (67 aa). A PH domain is found at 149–184; it reads SGCKALKEGVLEKRSDGLLQLWKKKCCILTEEGLLL. Disordered stretches follow at residues 188–224 and 296–407; these read KQVQ…EPPA and QQHL…SNSA. 2 stretches are compositionally biased toward low complexity: residues 189–204 and 297–319; these read QVQH…QPGQ and QHLV…QPQI. The tract at residues 312-348 is 15 X 2 AA repeats of P-Q; that stretch reads PQPQQPQIQPQPQPQIQPQPQPQPQPQPQPQQQPQPQ. The span at 320–344 shows a compositional bias: pro residues; the sequence is QPQPQPQIQPQPQPQPQPQPQPQQQ. The tract at residues 354 to 381 is 11 X 2 AA repeats of P-H; that stretch reads PHPHPHLYPHPHPHAHSHPHPHPHPHPH. A compositionally biased stretch (basic residues) spans 354–384; it reads PHPHPHLYPHPHPHAHSHPHPHPHPHPHQLQ. Residues 385–395 are compositionally biased toward low complexity; that stretch reads HAHQPLHSQPQ.

In terms of assembly, interacts with RPL14, EIF3S7 and PABPC4.

The protein resides in the cytoplasm. It is found in the cytoplasmic vesicle. Its subcellular location is the nucleus. It localises to the nucleolus. In terms of biological role, seems to be involved in regulation of apoptosis. May be involved in detachment-mediated programmed cell death. May mediate apoptosis during neuronal development. May be involved in regulation of anti-apoptotic effects of IGF1. May be involved in translational regulation. In Rattus norvegicus (Rat), this protein is Pleckstrin homology-like domain family A member 1 (Phlda1).